Here is a 223-residue protein sequence, read N- to C-terminus: Coiled-coil domain-containing protein 70 (223 aa).

Residues 129 to 153 (NALWERDRNLLQEDKALWEEEKALW) adopt a coiled-coil conformation. Residues 199-223 (EQRHQNGPYNANEEPQSTSFPRGRA) are disordered. Over residues 203–223 (QNGPYNANEEPQSTSFPRGRA) the composition is skewed to polar residues.

This chain is Coiled-coil domain-containing protein 70, found in Mus musculus (Mouse).